The following is a 430-amino-acid chain: Glutamine synthetase, chloroplastic/mitochondrial (430 aa).

Residues 1-45 (MAQILAASPTCQMRVPKHSSVIASSSKLWSSVVLKQKKQSNNKVR) constitute a chloroplast and mitochondrion transit peptide. Residues 77–157 (IIAEYIWIGG…VICDTWTPAG (81 aa)) enclose the GS beta-grasp domain. The interval 97 to 122 (TIEKPVEDPSELPKWNYDGSSTGQAP) is disordered. Ser-106 is subject to Phosphoserine. Residues 161-430 (PTNKRAKAAE…LAAQKLSLNV (270 aa)) enclose the GS catalytic domain.

The protein belongs to the glutamine synthetase family. In terms of assembly, homooctamer. Expressed in mesophyll and epidermal cells of leaves.

It is found in the plastid. It localises to the chloroplast. The protein localises to the mitochondrion. The enzyme catalyses L-glutamate + NH4(+) + ATP = L-glutamine + ADP + phosphate + H(+). The light-modulated chloroplast/mitochondrial enzyme, encoded by a nuclear gene and expressed primarily in leaves, is responsible for the reassimilation of the ammonia generated by photorespiration. The polypeptide is Glutamine synthetase, chloroplastic/mitochondrial (GLN2) (Arabidopsis thaliana (Mouse-ear cress)).